The following is a 198-amino-acid chain: Transcription factor FapR (198 aa).

A MaoC-like domain is found at 102 to 168 (TRIARGHHLF…GRTVVDVNSY (67 aa)).

This sequence belongs to the FapR family.

Its function is as follows. Transcriptional factor involved in regulation of membrane lipid biosynthesis by repressing genes involved in fatty acid and phospholipid metabolism. The sequence is that of Transcription factor FapR from Geobacillus thermodenitrificans (strain NG80-2).